The sequence spans 911 residues: Brevican core protein (911 aa).

A signal peptide spans 1 to 22; it reads MAQLFLPLLAALVLAQAPAALA. Residues 36-155 form the Ig-like V-type domain; the sequence is RVRIAGDAPL…SSDAVEVKVK (120 aa). 5 disulfide bridges follow: C57/C137, C179/C250, C203/C224, C277/C352, and C301/C322. N-linked (GlcNAc...) asparagine glycosylation is present at N130. Link domains lie at 157-252 and 257-354; these read VVFL…YCYA and GELF…YCFR. N337 carries an N-linked (GlcNAc...) asparagine glycan. The interval 391 to 641 is disordered; it reads QLPQEATESE…PTDSASRGGV (251 aa). Position 418 is a phosphoserine (S418). Residue S418 is glycosylated (O-linked (Xyl...) (chondroitin sulfate) serine). The span at 454-478 shows a compositional bias: acidic residues; it reads EEEEKYEDEEEKEEEEEEEEVEDEA. O-glycosylated at two sites stretches follow at residues 520-530 and 540-545; these read SPLPDGESEAS and TETLPT. The segment at 569-575 is O-glycosylated at one site; sequence TGGPELS. Residues 612 to 627 are compositionally biased toward polar residues; sequence EDNSGRTAPAGTSVQA. Residue A646 is the site of GPI-anchor amidated alanine attachment. One can recognise an EGF-like domain in the interval 646 to 682; that stretch reads ASGDCVPSPCHNGGTCLEEEEGVRCLCLPGYGGDLCD. 8 cysteine pairs are disulfide-bonded: C650–C661, C655–C670, C672–C681, C688–C699, C716–C808, C784–C800, C815–C858, and C844–C871. Residues 695 to 809 form the C-type lectin domain; the sequence is FQGACYKHFS…CNYHLSYTCK (115 aa). The region spanning 813–873 is the Sushi domain; sequence VSCGPPPELP…WEAPQISCVP (61 aa). Residues S905 and S906 are each glycosylated (O-linked (GalNAc...) serine).

This sequence belongs to the aggrecan/versican proteoglycan family. As to quaternary structure, interacts with TNR. In terms of processing, O-glycosylated; contains chondroitin sulfate. O-glycosylated with a core 1 or possibly core 8 glycan. Expressed in the retina, specifically in the inner nuclear layer, inner plexiform layer and ganglion cell layer (at protein level). Detected in cerebrospinal fluid (at protein level). Detected in urine (at protein level).

It is found in the secreted. Its subcellular location is the extracellular space. The protein resides in the extracellular matrix. The protein localises to the membrane. May play a role in the terminally differentiating and the adult nervous system during postnatal development. Could stabilize interactions between hyaluronan (HA) and brain proteoglycans. This chain is Brevican core protein (BCAN), found in Homo sapiens (Human).